The following is a 64-amino-acid chain: Prokaryotic ubiquitin-like protein Pup (64 aa).

Residues 1-37 form a disordered region; that stretch reads MAQEQTKRGGGGGDDDDIAGSTAAGQERREKLTEETD. The interval 21–58 is ARC ATPase binding; it reads STAAGQERREKLTEETDDLLDEIDDVLEENAEDFVRAY. The stretch at 23–52 forms a coiled coil; that stretch reads AAGQERREKLTEETDDLLDEIDDVLEENAE. Q64 is subject to Deamidated glutamine. Residue Q64 forms an Isoglutamyl lysine isopeptide (Gln-Lys) (interchain with K-? in acceptor proteins) linkage.

Belongs to the prokaryotic ubiquitin-like protein family. Strongly interacts with the proteasome-associated ATPase ARC through a hydrophobic interface; the interacting region of Pup lies in its C-terminal half. There is one Pup binding site per ARC hexamer ring. Post-translationally, is modified by deamidation of its C-terminal glutamine to glutamate by the deamidase Dop, a prerequisite to the subsequent pupylation process.

The protein operates within protein degradation; proteasomal Pup-dependent pathway. Protein modifier that is covalently attached to lysine residues of substrate proteins, thereby targeting them for proteasomal degradation. The tagging system is termed pupylation. The sequence is that of Prokaryotic ubiquitin-like protein Pup from Mycobacterium tuberculosis (strain ATCC 25177 / H37Ra).